The sequence spans 321 residues: tRNA(Ile)-lysidine synthase (321 aa).

30 to 35 (SGGSDS) is an ATP binding site.

The protein belongs to the tRNA(Ile)-lysidine synthase family.

The protein resides in the cytoplasm. The enzyme catalyses cytidine(34) in tRNA(Ile2) + L-lysine + ATP = lysidine(34) in tRNA(Ile2) + AMP + diphosphate + H(+). Its function is as follows. Ligates lysine onto the cytidine present at position 34 of the AUA codon-specific tRNA(Ile) that contains the anticodon CAU, in an ATP-dependent manner. Cytidine is converted to lysidine, thus changing the amino acid specificity of the tRNA from methionine to isoleucine. The sequence is that of tRNA(Ile)-lysidine synthase from Chlamydia trachomatis serovar D (strain ATCC VR-885 / DSM 19411 / UW-3/Cx).